The primary structure comprises 61 residues: Small ribosomal subunit protein uS14 (61 aa).

Zn(2+) is bound by residues C24, C27, C40, and C43.

The protein belongs to the universal ribosomal protein uS14 family. Zinc-binding uS14 subfamily. As to quaternary structure, part of the 30S ribosomal subunit. Contacts proteins S3 and S10. Zn(2+) is required as a cofactor.

Functionally, binds 16S rRNA, required for the assembly of 30S particles and may also be responsible for determining the conformation of the 16S rRNA at the A site. This chain is Small ribosomal subunit protein uS14, found in Deinococcus geothermalis (strain DSM 11300 / CIP 105573 / AG-3a).